Consider the following 358-residue polypeptide: CCAAT/enhancer-binding protein alpha (358 aa).

Positions 1–55 (MESADFYEAEPRPPMSSHLQSPPHAPSNAAFGFPRGAGPAPPPAPPAAPEPLGGI) are disordered. Residues 1-70 (MESADFYEAE…SIDISAYIDP (70 aa)) form a required to repress E2F1:TFDP1-mediated transcription, to inhibit cell cycle and to induce adipocyte differentiation region. Residues 29–38 (AAFGFPRGAG) are compositionally biased toward low complexity. Residues 39–49 (PAPPPAPPAAP) show a composition bias toward pro residues. Positions 54–72 (GICEHETSIDISAYIDPAA) are required for interaction with TRIB1. Residues 126–200 (PPGYGCAAAG…HASPAHLAAP (75 aa)) are required to induce adipocyte differentiation. Position 159 is an N6-acetyllysine; alternate (Lys-159). Lys-159 participates in a covalent cross-link: Glycyl lysine isopeptide (Lys-Gly) (interchain with G-Cter in SUMO); alternate. Lys-159 participates in a covalent cross-link: Glycyl lysine isopeptide (Lys-Gly) (interchain with G-Cter in SUMO2); alternate. Disordered regions lie at residues 176–195 (LFPY…ASPA) and 213–310 (TMHL…NVET). The segment covering 179-191 (YQPPPPPPPPHPH) has biased composition (pro residues). The interval 180–194 (QPPPPPPPPHPHASP) is required to functionally cooperate with SREBF1 in promoter activation. Ser-193 carries the post-translational modification Phosphoserine. Residues 220–234 (HPTPPPTPVPSPHPA) are compositionally biased toward pro residues. 2 positions are modified to phosphothreonine; by GSK3: Thr-222 and Thr-226. Ser-230 bears the Phosphoserine; by GSK3 mark. The interaction with FOXO1 stretch occupies residues 240 to 358 (AGLPGPGGSL…SLVKAMGNCA (119 aa)). Positions 261-271 (TGGGGGGGAGA) are enriched in gly residues. A compositionally biased stretch (basic and acidic residues) spans 276 to 292 (KSVDKNSNEYRVRRERN). The bZIP domain occupies 282–345 (SNEYRVRRER…DTLRGIFRQL (64 aa)). Residues 285–300 (YRVRRERNNIAVRKSR) mediate DNA binding. The basic motif stretch occupies residues 286–313 (RVRRERNNIAVRKSRDKAKQRNVETQQK). The segment at 317 to 345 (LTSDNDRLRKRVEQLSRELDTLRGIFRQL) is leucine-zipper.

This sequence belongs to the bZIP family. C/EBP subfamily. As to quaternary structure, binds DNA as a homodimer and as a heterodimer. Can form stable heterodimers with CEBPB, CEBPD, CEBPE and CEBPG. Can form stable homodimers (also isoform 2 and isoform 3 dimers) and heterodimers with CEBPB (with isoform 2 and isoform 3) and CEBPG. Interacts with PRDM16. Interacts with UBN1. Interacts with ZNF638; this interaction increases transcriptional activation. Interacts with the complex TFDP2:E2F1; the interaction prevents CEBPA binding to target gene promoters and represses its transcriptional activity. Interacts with RB1. Interacts (when phosphorylated at Ser-193) with CDK2, CDK4, E2F4 and SMARCA2. Interacts with SREBPF1. Interacts with FOXO1 (via the Fork-head domain); the interaction increases when FOXO1 is deacetylated. Interacts with SIX1. Interacts (via recognition sequence) with TRIB1. In terms of assembly, interacts with TAF1A and UBTF. Interacts with NPM1. Sumoylated, sumoylation blocks the inhibitory effect on cell proliferation by disrupting the interaction with SMARCA2. In terms of processing, phosphorylation at Ser-193 is required for interaction with CDK2, CDK4 and SWI/SNF complex leading to cell cycle inhibition. Dephosphorylated at Ser-193 by protein phosphatase 2A (PP2A) through PI3K/AKT signaling pathway regulation. Phosphorylation at Thr-222 and Thr-226 by GSK3 is constitutive in adipose tissue and lung. In liver, both Thr-222 and Thr-226 are phosphorylated only during feeding but not during fasting. Phosphorylation of the GSK3 consensus sites selectively decreases transactivation activity on IRE-controlled promoters. Post-translationally, ubiquitinated by COP1 upon interaction with TRIB1. As to expression, isoform 2 and isoform 3 are expressed in liver (at protein level).

It localises to the nucleus. It is found in the nucleolus. Transcription factor that coordinates proliferation arrest and the differentiation of myeloid progenitors, adipocytes, hepatocytes, and cells of the lung and the placenta. Binds directly to the consensus DNA sequence 5'-T[TG]NNGNAA[TG]-3' acting as an activator on distinct target genes. During early embryogenesis, plays essential and redundant functions with CEBPB. Essential for the transition from common myeloid progenitors (CMP) to granulocyte/monocyte progenitors (GMP). Critical for the proper development of the liver and the lung. Necessary for terminal adipocyte differentiation, is required for postnatal maintenance of systemic energy homeostasis and lipid storage. To regulate these different processes at the proper moment and tissue, interplays with other transcription factors and modulators. Down-regulates the expression of genes that maintain cells in an undifferentiated and proliferative state through E2F1 repression, which is critical for its ability to induce adipocyte and granulocyte terminal differentiation. Reciprocally E2F1 blocks adipocyte differentiation by binding to specific promoters and repressing CEBPA binding to its target gene promoters. Proliferation arrest also depends on a functional binding to SWI/SNF complex. In liver, regulates gluconeogenesis and lipogenesis through different mechanisms. To regulate gluconeogenesis, functionally cooperates with FOXO1 binding to IRE-controlled promoters and regulating the expression of target genes such as PCK1 or G6PC1. To modulate lipogenesis, interacts and transcriptionally synergizes with SREBF1 in promoter activation of specific lipogenic target genes such as ACAS2. In adipose tissue, seems to act as FOXO1 coactivator accessing to ADIPOQ promoter through FOXO1 binding sites. In terms of biological role, can act as dominant-negative. Binds DNA and have transctivation activity, even if much less efficiently than isoform 2. Does not inhibit cell proliferation. Functionally, directly and specifically enhances ribosomal DNA transcription interacting with RNA polymerase I-specific cofactors and inducing histone acetylation. The polypeptide is CCAAT/enhancer-binding protein alpha (Rattus norvegicus (Rat)).